We begin with the raw amino-acid sequence, 633 residues long: Extracellular metalloproteinase 3 (633 aa).

The first 18 residues, 1 to 18, serve as a signal peptide directing secretion; sequence MHGLLLAGLLALPMNVLA. Positions 19-246 are excised as a propeptide; the sequence is HPAEHHASNV…VHNVVDYVAS (228 aa). N-linked (GlcNAc...) asparagine glycans are attached at residues asparagine 232 and asparagine 410. Histidine 429 provides a ligand contact to Zn(2+). Residue glutamate 430 is part of the active site. Histidine 433 lines the Zn(2+) pocket. N-linked (GlcNAc...) asparagine glycosylation is found at asparagine 480 and asparagine 622.

Belongs to the peptidase M36 family. It depends on Zn(2+) as a cofactor.

The protein localises to the secreted. Secreted metalloproteinase that allows assimilation of proteinaceous substrates and probably acts as a virulence factor. This is Extracellular metalloproteinase 3 (MEP3) from Arthroderma gypseum (strain ATCC MYA-4604 / CBS 118893) (Microsporum gypseum).